Consider the following 51-residue polypeptide: MRDKIKLESGAGTGHFYTTTKNKRTMPGKLEIKKFDPVARKHVVYKETKLK.

The interval methionine 1 to lysine 21 is disordered.

This sequence belongs to the bacterial ribosomal protein bL33 family.

The polypeptide is Large ribosomal subunit protein bL33 (Neisseria gonorrhoeae (strain ATCC 700825 / FA 1090)).